Reading from the N-terminus, the 208-residue chain is Ribosomal RNA small subunit methyltransferase G (208 aa).

S-adenosyl-L-methionine contacts are provided by residues glycine 78, phenylalanine 83, 101-103 (ERS), 129-130 (IE), and arginine 142.

Belongs to the methyltransferase superfamily. RNA methyltransferase RsmG family.

The protein resides in the cytoplasm. Specifically methylates the N7 position of a guanine in 16S rRNA. This is Ribosomal RNA small subunit methyltransferase G from Borrelia garinii subsp. bavariensis (strain ATCC BAA-2496 / DSM 23469 / PBi) (Borreliella bavariensis).